A 352-amino-acid polypeptide reads, in one-letter code: D-alanine--D-alanine ligase A (352 aa).

The ATP-grasp domain occupies 138 to 341 (KRMVQSAGLV…PPKLVGALVE (204 aa)). 165-220 (ECLGSSTLFVKPATSGSSIGVSRVSNALEYAAAFAIAAREDTKVLVEAAVCGREIE) provides a ligand contact to ATP. Mg(2+) is bound by residues aspartate 295, glutamate 308, and asparagine 310.

Belongs to the D-alanine--D-alanine ligase family. Mg(2+) serves as cofactor. Requires Mn(2+) as cofactor.

The protein resides in the cytoplasm. It catalyses the reaction 2 D-alanine + ATP = D-alanyl-D-alanine + ADP + phosphate + H(+). It participates in cell wall biogenesis; peptidoglycan biosynthesis. In terms of biological role, cell wall formation. The polypeptide is D-alanine--D-alanine ligase A (Pseudomonas putida (strain ATCC 47054 / DSM 6125 / CFBP 8728 / NCIMB 11950 / KT2440)).